The primary structure comprises 161 residues: Allophycocyanin beta chain (161 aa).

At Asn71 the chain carries N4-methylasparagine. Cys81 lines the (2R,3E)-phycocyanobilin pocket.

Belongs to the phycobiliprotein family. As to quaternary structure, heterodimer of an alpha and a beta chain. Post-translationally, contains one covalently linked phycocyanobilin chromophore.

The protein localises to the cellular thylakoid membrane. Functionally, light-harvesting photosynthetic bile pigment-protein from the phycobiliprotein complex. Allophycocyanin has a maximum absorption at approximately 650 nanometers. The sequence is that of Allophycocyanin beta chain (apcB) from Synechocystis sp. (strain ATCC 27184 / PCC 6803 / Kazusa).